A 476-amino-acid chain; its full sequence is MAYLKVSGTKIVDKDGNEVILRGAGLGGWMNMENFITGYPGCEFQIRAALADVVGQEKSEFFFDKFLEYFFTDADAAFFKSLGLNCIRLPFNYRHFEDDMNPRVLKPEGFKHLDRVIDICAKHGIYTVLDLHTAPGGQNTDWHSDAGTHIAKFWEHKDFQDRVIWLWEELAQHYRDNTWIAGYNPLNEPTDPYQTRLIAWYDRVYAAIRKHDPHHALFLDGNTFASDFSHFGDAEKRWENTAYAIHDYSVFGFPAAPEPYVSSEAQRRRLRRSYEKKREWMDARGLCVWNGEFGPVYARREYEGDLTDSINEERYRVLKDQLEIYNKDRLSWSIWLYKDIGFQGMVHVSRDTPYMTLFRDFLAKKHRLAIDAWGADDSAVRHVYQPLIDLIKQEVKPEHQELYPAPVWKLSDRVGRLARNILVSEFLVREWAEHFRGKSTEELDAIAKSFAFENCLHRDGLNKVLTDNASLVAQGA.

The active-site Proton donor is the Glu-188. The Nucleophile role is filled by Glu-292. Residue Asn-468 is glycosylated (N-linked (GlcNAc...) asparagine).

This sequence belongs to the glycosyl hydrolase 5 (cellulase A) family.

The protein resides in the secreted. It catalyses the reaction Hydrolysis of (1-&gt;4)-beta-D-xylans, to remove successive D-xylose residues from the non-reducing termini.. Functionally, catalyzes the hydrolysis of xylo-oligomers to xylose units and plays an important role in xylan degradation. Can also perform the transglycosylation of xylose and alcohol. Has no endoglucanase activity. This Phanerodontia chrysosporium (White-rot fungus) protein is Beta-xylosidase.